Here is an 80-residue protein sequence, read N- to C-terminus: Trefoil factor 3 (80 aa).

A signal peptide spans 1 to 23; it reads MEARVLWLLVVVLVLGSSSLAVA. The P-type domain maps to 30–73; it reads NLCEVPPKDRVDCGYPEITSEQCVNRGCCFDSSIHGVPWCFKPL. 3 disulfide bridges follow: Cys-32–Cys-58, Cys-42–Cys-57, and Cys-52–Cys-69.

Monomer. Homodimer; disulfide-linked.

The protein localises to the secreted. It is found in the extracellular space. It localises to the extracellular matrix. Its subcellular location is the cytoplasm. In terms of biological role, involved in the maintenance and repair of the intestinal mucosa. Promotes the mobility of epithelial cells in healing processes (motogen). The polypeptide is Trefoil factor 3 (TFF3) (Canis lupus familiaris (Dog)).